Reading from the N-terminus, the 31-residue chain is Palustrin-2a (31 aa).

Cys23 and Cys29 are oxidised to a cystine.

In terms of tissue distribution, expressed by the skin glands.

The protein resides in the secreted. In terms of biological role, antimicrobial activity against Gram-negative bacterium E.coli. This chain is Palustrin-2a, found in Lithobates palustris (Pickerel frog).